The primary structure comprises 220 residues: Ribosomal RNA large subunit methyltransferase E (220 aa).

5 residues coordinate S-adenosyl-L-methionine: Gly60, Trp62, Asp92, Asp108, and Asp133. Lys173 acts as the Proton acceptor in catalysis.

The protein belongs to the class I-like SAM-binding methyltransferase superfamily. RNA methyltransferase RlmE family.

The protein localises to the cytoplasm. The enzyme catalyses uridine(2552) in 23S rRNA + S-adenosyl-L-methionine = 2'-O-methyluridine(2552) in 23S rRNA + S-adenosyl-L-homocysteine + H(+). In terms of biological role, specifically methylates the uridine in position 2552 of 23S rRNA at the 2'-O position of the ribose in the fully assembled 50S ribosomal subunit. The sequence is that of Ribosomal RNA large subunit methyltransferase E from Paraburkholderia xenovorans (strain LB400).